The sequence spans 265 residues: Tryptophan synthase alpha chain (265 aa).

Catalysis depends on proton acceptor residues glutamate 49 and aspartate 60.

It belongs to the TrpA family. As to quaternary structure, tetramer of two alpha and two beta chains.

It catalyses the reaction (1S,2R)-1-C-(indol-3-yl)glycerol 3-phosphate + L-serine = D-glyceraldehyde 3-phosphate + L-tryptophan + H2O. Its pathway is amino-acid biosynthesis; L-tryptophan biosynthesis; L-tryptophan from chorismate: step 5/5. In terms of biological role, the alpha subunit is responsible for the aldol cleavage of indoleglycerol phosphate to indole and glyceraldehyde 3-phosphate. This chain is Tryptophan synthase alpha chain, found in Ralstonia nicotianae (strain ATCC BAA-1114 / GMI1000) (Ralstonia solanacearum).